The following is a 328-amino-acid chain: tRNA uridine(34) hydroxylase (328 aa).

The Rhodanese domain maps to 130–224; sequence LDKDTVVLDT…YGKDPEVQGE (95 aa). Cys184 acts as the Cysteine persulfide intermediate in catalysis.

This sequence belongs to the TrhO family.

It catalyses the reaction uridine(34) in tRNA + AH2 + O2 = 5-hydroxyuridine(34) in tRNA + A + H2O. Catalyzes oxygen-dependent 5-hydroxyuridine (ho5U) modification at position 34 in tRNAs. The protein is tRNA uridine(34) hydroxylase of Streptococcus pneumoniae serotype 19F (strain G54).